A 689-amino-acid chain; its full sequence is Glycine--tRNA ligase beta subunit (689 aa).

The protein belongs to the class-II aminoacyl-tRNA synthetase family. Tetramer of two alpha and two beta subunits.

It localises to the cytoplasm. It catalyses the reaction tRNA(Gly) + glycine + ATP = glycyl-tRNA(Gly) + AMP + diphosphate. This Aeromonas hydrophila subsp. hydrophila (strain ATCC 7966 / DSM 30187 / BCRC 13018 / CCUG 14551 / JCM 1027 / KCTC 2358 / NCIMB 9240 / NCTC 8049) protein is Glycine--tRNA ligase beta subunit.